A 396-amino-acid chain; its full sequence is E3 ubiquitin-protein ligase NHLRC1 (396 aa).

The RING-type zinc finger occupies 23 to 69 (CKVCFERFGHRQQRRPRNLPCGHVVCLACVAALAHPRTLALECPFCR). 6 NHL repeats span residues 110–154 (ALTC…FDSG), 158–201 (AHQF…FDFF), 202–242 (GQIK…LEAD), 245–298 (EGVL…FNSS), 299–347 (MQLI…LGKP), and 348–391 (EEFP…FKVM).

In terms of assembly, interacts with AGL. Interacts (via the NHL repeats) with EPM2A/laforin. Forms a complex with EPM2A/laforin and HSP70.

The protein localises to the endoplasmic reticulum. It localises to the nucleus. The catalysed reaction is S-ubiquitinyl-[E2 ubiquitin-conjugating enzyme]-L-cysteine + [acceptor protein]-L-lysine = [E2 ubiquitin-conjugating enzyme]-L-cysteine + N(6)-ubiquitinyl-[acceptor protein]-L-lysine.. It functions in the pathway protein modification; protein ubiquitination. Functionally, E3 ubiquitin-protein ligase. Together with the phosphatase EPM2A/laforin, appears to be involved in the clearance of toxic polyglucosan and protein aggregates via multiple pathways. In complex with EPM2A/laforin and HSP70, suppresses the cellular toxicity of misfolded proteins by promoting their degradation through the ubiquitin-proteasome system (UPS). Ubiquitinates the glycogen-targeting protein phosphatase subunits PPP1R3C/PTG and PPP1R3D in a laforin-dependent manner and targets them for proteasome-dependent degradation, thus decreasing glycogen accumulation. Polyubiquitinates EPM2A/laforin and ubiquitinates AGL and targets them for proteasome-dependent degradation. Also promotes proteasome-independent protein degradation through the macroautophagy pathway. The polypeptide is E3 ubiquitin-protein ligase NHLRC1 (Nhlrc1) (Rattus norvegicus (Rat)).